Reading from the N-terminus, the 329-residue chain is DNA-directed RNA polymerase subunit alpha (329 aa).

The interval 1-232 (MQEMLEQLLT…YQLIAFVDLK (232 aa)) is alpha N-terminal domain (alpha-NTD). The interval 246–329 (FDPIFLQPVD…PSSLVSKESA (84 aa)) is alpha C-terminal domain (alpha-CTD).

Belongs to the RNA polymerase alpha chain family. In terms of assembly, homodimer. The RNAP catalytic core consists of 2 alpha, 1 beta, 1 beta' and 1 omega subunit. When a sigma factor is associated with the core the holoenzyme is formed, which can initiate transcription.

It catalyses the reaction RNA(n) + a ribonucleoside 5'-triphosphate = RNA(n+1) + diphosphate. In terms of biological role, DNA-dependent RNA polymerase catalyzes the transcription of DNA into RNA using the four ribonucleoside triphosphates as substrates. In Hydrogenovibrio crunogenus (strain DSM 25203 / XCL-2) (Thiomicrospira crunogena), this protein is DNA-directed RNA polymerase subunit alpha.